The following is a 164-amino-acid chain: Transcriptional repressor NrdR (164 aa).

Residues 3–34 (CPFCRHEDSRVVDSRSLDDGSAIRRRRQCQAC) fold into a zinc finger. Positions 46 to 136 (LTVVKRSGVA…VYRDFESLDD (91 aa)) constitute an ATP-cone domain.

The protein belongs to the NrdR family. Zn(2+) serves as cofactor.

Its function is as follows. Negatively regulates transcription of bacterial ribonucleotide reductase nrd genes and operons by binding to NrdR-boxes. This chain is Transcriptional repressor NrdR, found in Micrococcus luteus (strain ATCC 4698 / DSM 20030 / JCM 1464 / CCM 169 / CCUG 5858 / IAM 1056 / NBRC 3333 / NCIMB 9278 / NCTC 2665 / VKM Ac-2230) (Micrococcus lysodeikticus).